The following is a 285-amino-acid chain: RNA polymerase sigma factor RpoH (285 aa).

Residues 53–122 (LILSHLRFVV…IHEYVLRNWR (70 aa)) are sigma-70 factor domain-2. Positions 77–80 (DLIQ) match the Interaction with polymerase core subunit RpoC motif. The sigma-70 factor domain-4 stretch occupies residues 229–281 (AMEGLDERSQDIIRARWLDEDNKSTLQELADRYGVSAERVRQLEKNAMKKLRA). The segment at residues 254–273 (LQELADRYGVSAERVRQLEK) is a DNA-binding region (H-T-H motif).

This sequence belongs to the sigma-70 factor family. RpoH subfamily. In terms of assembly, interacts with the RNA polymerase core enzyme.

The protein resides in the cytoplasm. Its function is as follows. Sigma factors are initiation factors that promote the attachment of RNA polymerase to specific initiation sites and are then released. This sigma factor is involved in regulation of expression of heat shock genes. The chain is RNA polymerase sigma factor RpoH from Enterobacter cloacae.